Reading from the N-terminus, the 276-residue chain is Undecaprenyl-diphosphatase 1 (276 aa).

Helical transmembrane passes span 85 to 105 (MNVVIATLPAIALALLFEKTI), 108 to 128 (VLFAPVPVAVALVVGGAVILW), 187 to 207 (VATEFSFFLAIPVIFGATLYE), 217 to 237 (VDSIGLFAIGLAAAFVSAFAC), and 253 to 273 (FAWYRIVFGLFVLLVGYSGWI).

This sequence belongs to the UppP family.

It localises to the cell inner membrane. It carries out the reaction di-trans,octa-cis-undecaprenyl diphosphate + H2O = di-trans,octa-cis-undecaprenyl phosphate + phosphate + H(+). Functionally, catalyzes the dephosphorylation of undecaprenyl diphosphate (UPP). Confers resistance to bacitracin. The sequence is that of Undecaprenyl-diphosphatase 1 from Burkholderia thailandensis (strain ATCC 700388 / DSM 13276 / CCUG 48851 / CIP 106301 / E264).